A 501-amino-acid chain; its full sequence is Cytokinin dehydrogenase 2 (501 aa).

The first 22 residues, Met-1–Gly-22, serve as a signal peptide directing secretion. N-linked (GlcNAc...) asparagine glycans are attached at residues Asn-32 and Asn-51. Residues Thr-53–Ala-226 enclose the FAD-binding PCMH-type domain. FAD-binding residues include Ala-87, Gly-89, and Gly-91. His-92 bears the Pros-8alpha-FAD histidine mark. Ser-93 and Gln-97 together coordinate FAD. Asn-107 is a glycosylation site (N-linked (GlcNAc...) asparagine). FAD is bound by residues Asp-150, Thr-155, Ser-161, Ile-165, Ile-216, Tyr-460, Ser-495, and Gln-498.

It belongs to the oxygen-dependent FAD-linked oxidoreductase family. The cofactor is FAD. As to expression, expressed in the shoot apex, in stipules, and occasionally in the most apical part of the inflorescence stems. Not detected in roots.

It localises to the endoplasmic reticulum. It is found in the secreted. The protein localises to the extracellular space. It catalyses the reaction N(6)-dimethylallyladenine + A + H2O = 3-methyl-2-butenal + adenine + AH2. In terms of biological role, catalyzes the oxidation of cytokinins, a family of N(6)-substituted adenine derivatives that are plant hormones, where the substituent is an isopentenyl group. Modulates asymmetric cytokinin signaling in emerged lateral roots. Its activity determines cell elongation and number in emerged lateral roots and defines angular growth of lateral roots. This chain is Cytokinin dehydrogenase 2 (CKX2), found in Arabidopsis thaliana (Mouse-ear cress).